A 318-amino-acid chain; its full sequence is 2-keto-3-deoxygluconate permease (318 aa).

10 helical membrane passes run 10 to 30, 42 to 62, 82 to 102, 109 to 129, 139 to 159, 163 to 183, 201 to 221, 224 to 244, 257 to 277, and 289 to 309; these read LPGGMMLVPLLLGALCHTLWP, GLISGTVPILAVWFFCMGATI, IAVAWLVAVLCAPLLPIGGVS, LSVLALVAAMDMTNGGLYAAL, AGAVVLMSLESGPLISMLILG, LASFEPQLFVGAVLPLLLGFA, TLVPFFGFALGNTLDLSTIAH, TSGVLLGVAVVVITGLPLLLA, VAASSTAGAAVATPALIAGMA, and ALVASAVIVTSLLVPLLTALY.

It belongs to the KdgT transporter family.

The protein localises to the cell inner membrane. It catalyses the reaction 2-dehydro-3-deoxy-D-gluconate(in) + H(+)(in) = 2-dehydro-3-deoxy-D-gluconate(out) + H(+)(out). Catalyzes the proton-dependent uptake of 2-keto-3-deoxygluconate (KDG) into the cell. This chain is 2-keto-3-deoxygluconate permease, found in Xanthomonas axonopodis pv. citri (strain 306).